Reading from the N-terminus, the 513-residue chain is Interferon-induced, double-stranded RNA-activated protein kinase (513 aa).

Alanine 2 carries the N-acetylalanine modification. The 69-residue stretch at 8–76 (FYVDKLNKYS…AKLAVEILDN (69 aa)) folds into the DRBM 1 domain. Lysine 68 is covalently cross-linked (Glycyl lysine isopeptide (Lys-Gly) (interchain with G-Cter in ISG15)). At serine 82 the chain carries Phosphoserine. Threonine 84 bears the Phosphothreonine mark. The DRBM 2 domain occupies 95–162 (NYIGLVNSFA…AKNAYQKLSE (68 aa)). The residue at position 96 (tyrosine 96) is a Phosphotyrosine; by autocatalysis. Residue lysine 154 forms a Glycyl lysine isopeptide (Lys-Gly) (interchain with G-Cter in ISG15) linkage. Tyrosine 157 carries the phosphotyrosine; by autocatalysis modification. Threonine 227 is modified (phosphothreonine). Residues 235–513 (DFEDIEEIGS…ISEKKKRNTC (279 aa)) form an interaction with TRAF5 region. The region spanning 236–502 (FEDIEEIGSG…EILKTLAEWK (267 aa)) is the Protein kinase domain. Position 242–250 (242–250 (IGSGGFGQV)) interacts with ATP. The residue at position 262 (tyrosine 262) is a Phosphotyrosine; by autocatalysis. Lysine 265 contributes to the ATP binding site. Aspartate 373 (proton acceptor) is an active-site residue. 2 positions are modified to phosphothreonine; by autocatalysis: threonine 406 and threonine 411. Position 416 is a phosphoserine (serine 416).

Belongs to the protein kinase superfamily. Ser/Thr protein kinase family. GCN2 subfamily. In terms of assembly, homodimer. Interacts with DNAJC3. Interacts with STRBP. Forms a complex with FANCA, FANCC, FANCG and HSP70. Interacts with ADAR/ADAR1. The inactive form interacts with NCK1 and GSN. Interacts (via the kinase catalytic domain) with STAT3 (via SH2 domain), TRAF2 (C-terminus), TRAF5 (C-terminus) and TRAF6 (C-terminus). Interacts with MAP2K6, IKBKB/IKKB, IRS1, NPM1, TARBP2, NLRP1, NLRP3, NLRC4 and AIM2. Interacts (via DRBM 1 domain) with DUS2L (via DRBM domain). Interacts with DHX9 (via N-terminus) and this interaction is dependent upon activation of the kinase. Post-translationally, autophosphorylated on several Ser, Thr and Tyr residues. Autophosphorylation of Thr-411 is dependent on Thr-406 and is stimulated by dsRNA binding and dimerization. Autophosphorylation apparently leads to the activation of the kinase. Tyrosine autophosphorylation is essential for efficient dsRNA-binding, dimerization, and kinase activation.

It localises to the cytoplasm. It is found in the nucleus. The protein localises to the perinuclear region. It catalyses the reaction L-seryl-[protein] + ATP = O-phospho-L-seryl-[protein] + ADP + H(+). The enzyme catalyses L-threonyl-[protein] + ATP = O-phospho-L-threonyl-[protein] + ADP + H(+). The catalysed reaction is L-tyrosyl-[protein] + ATP = O-phospho-L-tyrosyl-[protein] + ADP + H(+). With respect to regulation, initially produced in an inactive form and is activated by binding to viral dsRNA, which causes dimerization and autophosphorylation in the activation loop and stimulation of function. ISGylation can activate it in the absence of viral infection. Can also be activated by heparin, pro-inflammatory stimuli, growth factors, cytokines, oxidative stress and the cellular protein PRKRA. Activity is markedly stimulated by manganese ions. Activation is blocked by the cellular proteins TARBP2, DUS2L, NPM1, NCK1 and ADAR. Functionally, IFN-induced dsRNA-dependent serine/threonine-protein kinase that phosphorylates the alpha subunit of eukaryotic translation initiation factor 2 (EIF2S1/eIF-2-alpha) and plays a key role in the innate immune response to viral infection. Inhibits viral replication via the integrated stress response (ISR): EIF2S1/eIF-2-alpha phosphorylation in response to viral infection converts EIF2S1/eIF-2-alpha in a global protein synthesis inhibitor, resulting to a shutdown of cellular and viral protein synthesis, while concomitantly initiating the preferential translation of ISR-specific mRNAs, such as the transcriptional activator ATF4. Exerts its antiviral activity on a wide range of DNA and RNA viruses. Also involved in the regulation of signal transduction, apoptosis, cell proliferation and differentiation: phosphorylates other substrates including p53/TP53, PPP2R5A, DHX9, ILF3 and IRS1. In addition to serine/threonine-protein kinase activity, also has tyrosine-protein kinase activity and phosphorylates CDK1 at 'Tyr-4' upon DNA damage, facilitating its ubiquitination and proteasomal degradation. Either as an adapter protein and/or via its kinase activity, can regulate various signaling pathways (p38 MAP kinase, NF-kappa-B and insulin signaling pathways) and transcription factors (JUN, STAT1, STAT3, IRF1, ATF3) involved in the expression of genes encoding pro-inflammatory cytokines and IFNs. Activates the NF-kappa-B pathway via interaction with IKBKB and TRAF family of proteins and activates the p38 MAP kinase pathway via interaction with MAP2K6. Can act as both a positive and negative regulator of the insulin signaling pathway (ISP). Negatively regulates ISP by inducing the inhibitory phosphorylation of insulin receptor substrate 1 (IRS1) at 'Ser-312' and positively regulates ISP via phosphorylation of PPP2R5A which activates FOXO1, which in turn up-regulates the expression of insulin receptor substrate 2 (IRS2). Can regulate NLRP3 inflammasome assembly and the activation of NLRP3, NLRP1, AIM2 and NLRC4 inflammasomes. Plays a role in the regulation of the cytoskeleton by binding to gelsolin (GSN), sequestering the protein in an inactive conformation away from actin. The chain is Interferon-induced, double-stranded RNA-activated protein kinase (Eif2ak2) from Rattus norvegicus (Rat).